The sequence spans 341 residues: Glycerol-3-phosphate dehydrogenase [NAD(P)+] (341 aa).

Positions 15, 16, 36, and 110 each coordinate NADPH. Sn-glycerol 3-phosphate is bound by residues Lys110, Gly139, and Ser141. Residue Ala143 coordinates NADPH. Positions 194, 247, 257, 258, and 259 each coordinate sn-glycerol 3-phosphate. Residue Lys194 is the Proton acceptor of the active site. Residue Arg258 coordinates NADPH. Positions 282 and 284 each coordinate NADPH.

The protein belongs to the NAD-dependent glycerol-3-phosphate dehydrogenase family.

The protein resides in the cytoplasm. It catalyses the reaction sn-glycerol 3-phosphate + NAD(+) = dihydroxyacetone phosphate + NADH + H(+). The catalysed reaction is sn-glycerol 3-phosphate + NADP(+) = dihydroxyacetone phosphate + NADPH + H(+). Its pathway is membrane lipid metabolism; glycerophospholipid metabolism. In terms of biological role, catalyzes the reduction of the glycolytic intermediate dihydroxyacetone phosphate (DHAP) to sn-glycerol 3-phosphate (G3P), the key precursor for phospholipid synthesis. The chain is Glycerol-3-phosphate dehydrogenase [NAD(P)+] from Xanthomonas oryzae pv. oryzae (strain MAFF 311018).